The sequence spans 604 residues: NADH-ubiquinone oxidoreductase chain 5 (604 aa).

16 helical membrane passes run 2-22, 41-61, 85-105, 115-135, 138-158, 169-189, 209-231, 239-259, 271-291, 299-318, 323-345, 364-384, 411-431, 455-475, 486-506, and 582-602; these read FSSL…LSIF, AFIT…ETII, MIFV…SLWY, FFKY…ANNL, LFIG…WWYG, AILY…WFLF, LPLL…HPWL, TPVS…FLLI, IQSL…ICAL, IIAF…IGIN, AFLH…GSII, MPFT…IPFL, LIAT…ALLG, LLIG…PTTV, LTAL…SLMT, and IKLY…LFNL.

It belongs to the complex I subunit 5 family. In terms of assembly, core subunit of respiratory chain NADH dehydrogenase (Complex I) which is composed of 45 different subunits.

Its subcellular location is the mitochondrion inner membrane. The catalysed reaction is a ubiquinone + NADH + 5 H(+)(in) = a ubiquinol + NAD(+) + 4 H(+)(out). In terms of biological role, core subunit of the mitochondrial membrane respiratory chain NADH dehydrogenase (Complex I) which catalyzes electron transfer from NADH through the respiratory chain, using ubiquinone as an electron acceptor. Essential for the catalytic activity and assembly of complex I. This Equus caballus (Horse) protein is NADH-ubiquinone oxidoreductase chain 5 (MT-ND5).